Reading from the N-terminus, the 307-residue chain is NAD(+) hydrolase TcpC (307 aa).

Residues 22–42 form a helical membrane-spanning segment; it reads YNILFFIFLSIAIPFLLFLAW. The region spanning 169 to 303 is the TIR domain; it reads THYDFFISHA…EIARELAEIA (135 aa). NAD(+) is bound by residues 178 to 179 and Glu-208; that span reads AK. The active site involves Glu-244.

Interacts with host MYD88. Interacts with host TLR4.

It is found in the secreted. Its subcellular location is the membrane. It carries out the reaction NAD(+) + H2O = ADP-D-ribose + nicotinamide + H(+). The catalysed reaction is NADP(+) + H2O = ADP-D-ribose 2'-phosphate + nicotinamide + H(+). Its function is as follows. Virulence factor that suppresses host Toll-like receptor (TLR)-mediated cytokine production upon infection, thereby increasing bacterial burden in the urinary tract and promoting renal tissue damage. Acts as a NAD(+) hydrolase (NADase) by catalyzing cleavage of NAD(+) into ADP-D-ribose (ADPR) and nicotinamide. Also able to hydrolyze NADP(+), but not other NAD(+)-related molecules. This is NAD(+) hydrolase TcpC from Escherichia coli O6:H1 (strain CFT073 / ATCC 700928 / UPEC).